The sequence spans 274 residues: Formamidopyrimidine-DNA glycosylase (274 aa).

The active-site Schiff-base intermediate with DNA is the P2. Residue E3 is the Proton donor of the active site. K58 (proton donor; for beta-elimination activity) is an active-site residue. The DNA site is built by H91 and R110. The FPG-type zinc-finger motif lies at 238–272; the sequence is QVYDKTGQECVRCGTIIEKIQLGGRGTHFCPNCQR. The active-site Proton donor; for delta-elimination activity is the R262.

Belongs to the FPG family. Monomer. Zn(2+) serves as cofactor.

It catalyses the reaction Hydrolysis of DNA containing ring-opened 7-methylguanine residues, releasing 2,6-diamino-4-hydroxy-5-(N-methyl)formamidopyrimidine.. The catalysed reaction is 2'-deoxyribonucleotide-(2'-deoxyribose 5'-phosphate)-2'-deoxyribonucleotide-DNA = a 3'-end 2'-deoxyribonucleotide-(2,3-dehydro-2,3-deoxyribose 5'-phosphate)-DNA + a 5'-end 5'-phospho-2'-deoxyribonucleoside-DNA + H(+). Functionally, involved in base excision repair of DNA damaged by oxidation or by mutagenic agents. Acts as a DNA glycosylase that recognizes and removes damaged bases. Has a preference for oxidized purines, such as 7,8-dihydro-8-oxoguanine (8-oxoG). Has AP (apurinic/apyrimidinic) lyase activity and introduces nicks in the DNA strand. Cleaves the DNA backbone by beta-delta elimination to generate a single-strand break at the site of the removed base with both 3'- and 5'-phosphates. This Streptococcus pneumoniae (strain ATCC BAA-255 / R6) protein is Formamidopyrimidine-DNA glycosylase.